We begin with the raw amino-acid sequence, 95 residues long: MRHYEVMIILDPSQDERTVAPSLDKFLEIVRKENGTVEKVDIWGKRRLAYPIAKKEEGIYAVVNLTCESATVLELDRVLNLNDSVMRTKVLRGDK.

Belongs to the bacterial ribosomal protein bS6 family.

In terms of biological role, binds together with bS18 to 16S ribosomal RNA. The chain is Small ribosomal subunit protein bS6 from Corynebacterium diphtheriae (strain ATCC 700971 / NCTC 13129 / Biotype gravis).